The sequence spans 513 residues: CUGBP Elav-like family member 1 (513 aa).

Residue T31 is modified to Phosphothreonine. RRM domains are found at residues 43 to 126 (IKMF…PADS) and 135 to 215 (RKLF…FADT). K136 is covalently cross-linked (Glycyl lysine isopeptide (Lys-Gly) (interchain with G-Cter in SUMO2)). Phosphoserine occurs at positions 206 and 329. The segment at 304-336 (TPSGTNALTTSSSPLSVLTSSGSSPSSSSSNSV) is disordered. The span at 311–336 (LTTSSSPLSVLTSSGSSPSSSSSNSV) shows a compositional bias: low complexity. One can recognise an RRM 3 domain in the interval 428–506 (ANLFIYHLPQ…KRLKVQLKRS (79 aa)).

Belongs to the CELF/BRUNOL family. Associates with polysomes. Interacts with HNRNPH1; the interaction in RNA-dependent. Interacts with PARN. Component of an EIF2 complex at least composed of CELF1/CUGBP1, CALR, CALR3, EIF2S1, EIF2S2, HSP90B1 and HSPA5.

Its subcellular location is the nucleus. It localises to the cytoplasm. In terms of biological role, RNA-binding protein implicated in the regulation of several post-transcriptional events. Involved in pre-mRNA alternative splicing, mRNA translation and stability. Mediates exon inclusion and/or exclusion in pre-mRNA that are subject to tissue-specific and developmentally regulated alternative splicing. Specifically activates exon 5 inclusion of cardiac isoforms of TNNT2 during heart remodeling at the juvenile to adult transition. Acts both as an activator and as a repressor of a pair of coregulated exons: promotes inclusion of the smooth muscle (SM) exon but exclusion of the non-muscle (NM) exon in actinin pre-mRNAs. Activates SM exon 5 inclusion by antagonizing the repressive effect of PTB. Promotes exclusion of exon 11 of the INSR pre-mRNA. Inhibits, together with HNRNPH1, insulin receptor (IR) pre-mRNA exon 11 inclusion in myoblast. Increases translation and controls the choice of translation initiation codon of CEBPB mRNA. Increases mRNA translation of CEBPB in aging liver. Increases translation of CDKN1A mRNA by antagonizing the repressive effect of CALR3. Mediates rapid cytoplasmic mRNA deadenylation. Recruits the deadenylase PARN to the poly(A) tail of EDEN-containing mRNAs to promote their deadenylation. Required for completion of spermatogenesis. Binds to (CUG)n triplet repeats in the 3'-UTR of transcripts such as DMPK and to Bruno response elements (BREs). Binds to muscle-specific splicing enhancer (MSE) intronic sites flanking the alternative exon 5 of TNNT2 pre-mRNA. Binds to AU-rich sequences (AREs or EDEN-like) localized in the 3'-UTR of JUN and FOS mRNAs. Binds to the IR RNA. Binds to the 5'-region of CDKN1A and CEBPB mRNAs. Binds with the 5'-region of CEBPB mRNA in aging liver. May be a specific regulator of miRNA biogenesis. Binds to primary microRNA pri-MIR140 and, with CELF2, negatively regulates the processing to mature miRNA. This is CUGBP Elav-like family member 1 (CELF1) from Pongo abelii (Sumatran orangutan).